Here is a 91-residue protein sequence, read N- to C-terminus: Small ribosomal subunit protein eS24 (91 aa).

Residues glutamine 51–arginine 91 are disordered.

It belongs to the eukaryotic ribosomal protein eS24 family.

This chain is Small ribosomal subunit protein eS24, found in Caenorhabditis elegans.